The chain runs to 718 residues: Polyphosphate kinase (718 aa).

Residue asparagine 47 participates in ATP binding. Mg(2+)-binding residues include arginine 372 and arginine 402. Histidine 432 serves as the catalytic Phosphohistidine intermediate. Residues tyrosine 465, arginine 561, and histidine 589 each contribute to the ATP site. The interval 683-718 (KADHGDTTPTSNAHQFIPMMSPKNEPDASDLDREDD) is disordered. Residues 709–718 (DASDLDREDD) show a composition bias toward acidic residues.

This sequence belongs to the polyphosphate kinase 1 (PPK1) family. The cofactor is Mg(2+). In terms of processing, an intermediate of this reaction is the autophosphorylated ppk in which a phosphate is covalently linked to a histidine residue through a N-P bond.

The catalysed reaction is [phosphate](n) + ATP = [phosphate](n+1) + ADP. Catalyzes the reversible transfer of the terminal phosphate of ATP to form a long-chain polyphosphate (polyP). This is Polyphosphate kinase from Lactiplantibacillus plantarum (strain ATCC BAA-793 / NCIMB 8826 / WCFS1) (Lactobacillus plantarum).